Reading from the N-terminus, the 124-residue chain is Biogenesis of lysosome-related organelles complex 1 subunit CNL1 (124 aa).

Residues 1 to 20 form a disordered region; that stretch reads MMSENITAVEPQENNDVEAD. Positions 75–98 form a coiled coil; the sequence is IGMAKDLLQKCDDLEKHYDQLDAV.

The protein belongs to the BLOC1S4 family. In terms of assembly, component of the biogenesis of lysosome-related organelles complex-1 (BLOC-1).

The protein localises to the cytoplasm. Its function is as follows. Component of the biogenesis of lysosome-related organelles complex-1 (BLOC-1), a complex that is involved in endosomal cargo sorting. This is Biogenesis of lysosome-related organelles complex 1 subunit CNL1 (CLN1) from Kluyveromyces lactis (strain ATCC 8585 / CBS 2359 / DSM 70799 / NBRC 1267 / NRRL Y-1140 / WM37) (Yeast).